Consider the following 468-residue polypeptide: Putative ankyrin repeat protein R580 (468 aa).

ANK repeat units lie at residues 12–41 (DYFD…TLID), 189–218 (VINK…EINC), 249–278 (CHFD…KINS), 336–365 (SFDN…NINF), 367–393 (NMPT…DLEI), and 394–423 (HGTL…KFSL).

This is Putative ankyrin repeat protein R580 from Acanthamoeba polyphaga (Amoeba).